The chain runs to 417 residues: Argininosuccinate synthase (417 aa).

8–16 (AYSGGLDTS) contributes to the ATP binding site. Tyrosine 87 provides a ligand contact to L-citrulline. Glycine 117 provides a ligand contact to ATP. L-aspartate is bound by residues threonine 119, asparagine 123, and aspartate 124. Residue asparagine 123 participates in L-citrulline binding. L-citrulline-binding residues include arginine 127, serine 175, glutamate 259, and tyrosine 271.

It belongs to the argininosuccinate synthase family. Type 1 subfamily. As to quaternary structure, homotetramer.

It localises to the cytoplasm. It carries out the reaction L-citrulline + L-aspartate + ATP = 2-(N(omega)-L-arginino)succinate + AMP + diphosphate + H(+). It participates in amino-acid biosynthesis; L-arginine biosynthesis; L-arginine from L-ornithine and carbamoyl phosphate: step 2/3. This chain is Argininosuccinate synthase, found in Clavibacter sepedonicus (Clavibacter michiganensis subsp. sepedonicus).